The chain runs to 890 residues: Kinesin-like protein KIF20A (890 aa).

Ser2 carries the N-acetylserine modification. 3 positions are modified to phosphoserine: Ser7, Ser14, and Ser21. Residues 64–507 enclose the Kinesin motor domain; it reads KVKVYLRVRP…AKFSAIASQL (444 aa). 160-167 provides a ligand contact to ATP; it reads GVTNSGKT. A Phosphoserine; by PLK1 modification is found at Ser528. Residues Ser532, Ser662, Ser668, Ser685, and Ser825 each carry the phosphoserine modification. Residues 611–762 adopt a coiled-coil conformation; sequence LDTQKELLEE…ESLQSAERAC (152 aa). The segment at 763–890 is globular; that stretch reads CHSTGAGKLR…LKSGPFGKKY (128 aa). The segment at 832–865 is disordered; it reads TNQENQQPNQQPPGKKPFLRNLLPRTPTCQSSTD. At Thr857 the chain carries Phosphothreonine. A phosphoserine mark is found at Ser867, Ser878, and Ser883.

The protein belongs to the TRAFAC class myosin-kinesin ATPase superfamily. Kinesin family. Phosphorylated by PLK1 at Ser-528 during mitosis, creating a docking site for PLK1 and recruiting PLK1 at central spindle.

Its subcellular location is the golgi apparatus. It is found in the cytoplasm. The protein resides in the cytoskeleton. It localises to the spindle. Its function is as follows. Mitotic kinesin required for chromosome passenger complex (CPC)-mediated cytokinesis. Following phosphorylation by PLK1, involved in recruitment of PLK1 to the central spindle. Interacts with guanosine triphosphate (GTP)-bound forms of RAB6A and RAB6B. May act as a motor required for the retrograde RAB6 regulated transport of Golgi membranes and associated vesicles along microtubules. Has a microtubule plus end-directed motility. The protein is Kinesin-like protein KIF20A (KIF20A) of Homo sapiens (Human).